An 88-amino-acid chain; its full sequence is Large ribosomal subunit protein bL27 (88 aa).

Residues 1-21 (MAHKKGASSSRNGRDSAAHRL) form a disordered region.

Belongs to the bacterial ribosomal protein bL27 family.

The protein is Large ribosomal subunit protein bL27 of Mycobacterium ulcerans (strain Agy99).